We begin with the raw amino-acid sequence, 103 residues long: Large ribosomal subunit protein bL21 (103 aa).

Belongs to the bacterial ribosomal protein bL21 family. As to quaternary structure, part of the 50S ribosomal subunit. Contacts protein L20.

Functionally, this protein binds to 23S rRNA in the presence of protein L20. This is Large ribosomal subunit protein bL21 from Thiobacillus denitrificans (strain ATCC 25259 / T1).